Consider the following 265-residue polypeptide: Selenoprotein Pb (265 aa).

An N-terminal signal peptide occupies residues 1–18; sequence MQALWPLLLSALPALLGA. N-linked (GlcNAc...) asparagine glycosylation occurs at Asn-28. Sec-64 is a non-standard amino acid (selenocysteine). 4 N-linked (GlcNAc...) asparagine glycosylation sites follow: Asn-88, Asn-178, Asn-184, and Asn-207. A disordered region spans residues 188–265; it reads SESSDSTKND…SHQEHVHNHR (78 aa). Over residues 201 to 211 the composition is skewed to polar residues; it reads ENNQRPNSTEP. Positions 215 to 231 are enriched in basic residues; that stretch reads AHHHHHQQHEPHHHHHN. A compositionally biased stretch (basic and acidic residues) spans 239–265; it reads KSGDSDVTGKPKEPPHHSHQEHVHNHR.

The protein localises to the secreted. In terms of biological role, might be responsible for some of the extracellular antioxidant defense properties of selenium. This is Selenoprotein Pb (sepp1b) from Danio rerio (Zebrafish).